The following is a 395-amino-acid chain: Protein NDRG1 (395 aa).

The segment at 325-395 (RSRTGSAASS…NTPKSMEISC (71 aa)) is disordered. A compositionally biased stretch (low complexity) spans 326 to 339 (SRTGSAASSSSQDG). Repeat copies occupy residues 339–348 (GNRSRSHTNE), 349–358 (GSRSRSHTGD), 359–368 (GNRSRAHTGD), and 369–378 (GNRSRSHTDS). Residues 339–378 (GNRSRSHTNEGSRSRSHTGDGNRSRAHTGDGNRSRSHTDS) form a 4 X 10 AA tandem repeats of G-[NS]-R-S-R-[AS]-H-T-[DGN]-[DES] region. The span at 345–376 (HTNEGSRSRSHTGDGNRSRAHTGDGNRSRSHT) shows a compositional bias: basic and acidic residues. Polar residues predominate over residues 377 to 389 (DSNNTNSEHNTPK).

It belongs to the NDRG family.

In terms of biological role, may be involved in pronephros development, after specification of the pronephros. This is Protein NDRG1 from Xenopus tropicalis (Western clawed frog).